The sequence spans 202 residues: Probable 1-Cys peroxiredoxin (202 aa).

A Thioredoxin domain is found at 1–148; the sequence is STHGKIRIHD…VVRAVDSLLT (148 aa). Cys-30 acts as the Cysteine sulfenic acid (-SOH) intermediate in catalysis. The Bipartite nuclear localization signal motif lies at 178 to 201; that stretch reads KKLFPQGFETKDLPSKKGYLRFTK.

Belongs to the peroxiredoxin family. Prx6 subfamily. In terms of tissue distribution, embryos.

It is found in the nucleus. Its subcellular location is the cytoplasm. It catalyses the reaction a hydroperoxide + [thioredoxin]-dithiol = an alcohol + [thioredoxin]-disulfide + H2O. Functionally, thiol-specific peroxidase that catalyzes the reduction of hydrogen peroxide and organic hydroperoxides to water and alcohols, respectively. Seems to contribute to the inhibition of germination during stress. The polypeptide is Probable 1-Cys peroxiredoxin (Bromus secalinus (Rye brome)).